Consider the following 396-residue polypeptide: L-lactate dehydrogenase (396 aa).

In terms of domain architecture, FMN hydroxy acid dehydrogenase spans 1-380; sequence MIISAASDYR…SRDSLVQELG (380 aa). Y24 is a binding site for substrate. FMN is bound by residues S106 and Q127. Y129 is a binding site for substrate. T155 lines the FMN pocket. Residue R164 coordinates substrate. K251 is a binding site for FMN. H275 serves as the catalytic Proton acceptor. R278 serves as a coordination point for substrate. 306–330 lines the FMN pocket; that stretch reads DSGIRNGLDVVRMIALGADSVLLGR.

This sequence belongs to the FMN-dependent alpha-hydroxy acid dehydrogenase family. The cofactor is FMN.

Its subcellular location is the cell inner membrane. The catalysed reaction is (S)-lactate + A = pyruvate + AH2. Functionally, catalyzes the conversion of L-lactate to pyruvate. Is coupled to the respiratory chain. In Citrobacter koseri (strain ATCC BAA-895 / CDC 4225-83 / SGSC4696), this protein is L-lactate dehydrogenase.